Here is a 269-residue protein sequence, read N- to C-terminus: Cytochrome c oxidase subunit 3 (269 aa).

7 consecutive transmembrane segments (helical) span residues 19–39 (PWPF…TLYL), 44–64 (HSSV…YLWF), 87–107 (IGFM…FWAF), 135–155 (LEVP…LTYA), 170–190 (GLYM…YEYW), 205–225 (FYFA…LLLA), and 247–267 (IYYW…IYIW).

Belongs to the cytochrome c oxidase subunit 3 family. As to quaternary structure, component of the cytochrome c oxidase (complex IV, CIV), a multisubunit enzyme composed of a catalytic core of 3 subunits and several supernumerary subunits. The complex exists as a monomer or a dimer and forms supercomplexes (SCs) in the inner mitochondrial membrane with ubiquinol-cytochrome c oxidoreductase (cytochrome b-c1 complex, complex III, CIII).

It is found in the mitochondrion inner membrane. It catalyses the reaction 4 Fe(II)-[cytochrome c] + O2 + 8 H(+)(in) = 4 Fe(III)-[cytochrome c] + 2 H2O + 4 H(+)(out). Its function is as follows. Component of the cytochrome c oxidase, the last enzyme in the mitochondrial electron transport chain which drives oxidative phosphorylation. The respiratory chain contains 3 multisubunit complexes succinate dehydrogenase (complex II, CII), ubiquinol-cytochrome c oxidoreductase (cytochrome b-c1 complex, complex III, CIII) and cytochrome c oxidase (complex IV, CIV), that cooperate to transfer electrons derived from NADH and succinate to molecular oxygen, creating an electrochemical gradient over the inner membrane that drives transmembrane transport and the ATP synthase. Cytochrome c oxidase is the component of the respiratory chain that catalyzes the reduction of oxygen to water. Electrons originating from reduced cytochrome c in the intermembrane space (IMS) are transferred via the dinuclear copper A center (CU(A)) of subunit 2 and heme A of subunit 1 to the active site in subunit 1, a binuclear center (BNC) formed by heme A3 and copper B (CU(B)). The BNC reduces molecular oxygen to 2 water molecules using 4 electrons from cytochrome c in the IMS and 4 protons from the mitochondrial matrix. The sequence is that of Cytochrome c oxidase subunit 3 (cox3) from Schizosaccharomyces pombe (strain 972 / ATCC 24843) (Fission yeast).